The primary structure comprises 315 residues: Cytosolic Fe-S cluster assembly factor nubp1-A (315 aa).

A disordered region spans residues Met1 to Ser23. [4Fe-4S] cluster is bound by residues Cys12, Cys26, Cys29, and Cys35. Gly66–Ser73 is a binding site for ATP. 2 residues coordinate [4Fe-4S] cluster: Cys239 and Cys242.

Belongs to the Mrp/NBP35 ATP-binding proteins family. NUBP1/NBP35 subfamily. As to quaternary structure, heterotetramer of 2 nubp1 and 2 nubp2 chains. [4Fe-4S] cluster is required as a cofactor.

The protein localises to the cytoplasm. Functionally, component of the cytosolic iron-sulfur (Fe/S) protein assembly (CIA) machinery. Required for maturation of extramitochondrial Fe-S proteins. The nubp1-nubp2 heterotetramer forms a Fe-S scaffold complex, mediating the de novo assembly of an Fe-S cluster and its transfer to target apoproteins. This Xenopus laevis (African clawed frog) protein is Cytosolic Fe-S cluster assembly factor nubp1-A (nubp1-A).